The sequence spans 165 residues: NAD(P)H-quinone oxidoreductase subunit J, chloroplastic (165 aa).

Belongs to the complex I 30 kDa subunit family. As to quaternary structure, NDH is composed of at least 16 different subunits, 5 of which are encoded in the nucleus.

It localises to the plastid. The protein resides in the chloroplast thylakoid membrane. The enzyme catalyses a plastoquinone + NADH + (n+1) H(+)(in) = a plastoquinol + NAD(+) + n H(+)(out). It catalyses the reaction a plastoquinone + NADPH + (n+1) H(+)(in) = a plastoquinol + NADP(+) + n H(+)(out). Functionally, NDH shuttles electrons from NAD(P)H:plastoquinone, via FMN and iron-sulfur (Fe-S) centers, to quinones in the photosynthetic chain and possibly in a chloroplast respiratory chain. The immediate electron acceptor for the enzyme in this species is believed to be plastoquinone. Couples the redox reaction to proton translocation, and thus conserves the redox energy in a proton gradient. The polypeptide is NAD(P)H-quinone oxidoreductase subunit J, chloroplastic (Ipomoea purpurea (Common morning glory)).